Reading from the N-terminus, the 635-residue chain is Chaperone protein HtpG (635 aa).

Positions 1–336 (MTTAEAAAPE…SADLPLNLSR (336 aa)) are a; substrate-binding. Residues 337–556 (EMLQDSAILA…ESGIDRRLEK (220 aa)) form a b region. A c region spans residues 557-635 (LLASAGRLGD…RVMQRGLPTA (79 aa)).

The protein belongs to the heat shock protein 90 family. In terms of assembly, homodimer.

It localises to the cytoplasm. Its function is as follows. Molecular chaperone. Has ATPase activity. The sequence is that of Chaperone protein HtpG from Azorhizobium caulinodans (strain ATCC 43989 / DSM 5975 / JCM 20966 / LMG 6465 / NBRC 14845 / NCIMB 13405 / ORS 571).